We begin with the raw amino-acid sequence, 511 residues long: Lysine--tRNA ligase (511 aa).

Positions 1 to 20 are disordered; that stretch reads MQKNTSQPTNTNEQSNQPSL. Glutamate 422 and glutamate 429 together coordinate Mg(2+).

This sequence belongs to the class-II aminoacyl-tRNA synthetase family. In terms of assembly, homodimer. The cofactor is Mg(2+).

The protein resides in the cytoplasm. The enzyme catalyses tRNA(Lys) + L-lysine + ATP = L-lysyl-tRNA(Lys) + AMP + diphosphate. The sequence is that of Lysine--tRNA ligase from Chlorobium chlorochromatii (strain CaD3).